The chain runs to 418 residues: Gamma-glutamyl phosphate reductase (418 aa).

This sequence belongs to the gamma-glutamyl phosphate reductase family.

Its subcellular location is the cytoplasm. The catalysed reaction is L-glutamate 5-semialdehyde + phosphate + NADP(+) = L-glutamyl 5-phosphate + NADPH + H(+). It functions in the pathway amino-acid biosynthesis; L-proline biosynthesis; L-glutamate 5-semialdehyde from L-glutamate: step 2/2. Functionally, catalyzes the NADPH-dependent reduction of L-glutamate 5-phosphate into L-glutamate 5-semialdehyde and phosphate. The product spontaneously undergoes cyclization to form 1-pyrroline-5-carboxylate. The polypeptide is Gamma-glutamyl phosphate reductase (Desulforapulum autotrophicum (strain ATCC 43914 / DSM 3382 / VKM B-1955 / HRM2) (Desulfobacterium autotrophicum)).